The following is a 277-amino-acid chain: MGNGVQPLDPVAIQIGSISVKWYGVIIASAVVIALLLALSEANKRKMDKEIIVDLLIWAIPISIISARIYYVIFEWDFYKNNLGEIVKIWHGGIAIYGALIGAVLTAIIFSRIKKISFWQLADVVAPSLIIAQAIGRWGNFMNQEAHGAETTRSFLESLHLPDFIINQMYIDGAYYQPTFLYESLWNVLGFIVLLIIRRTKIRRGELFLGYVIWYSFGRFFIEGMRTDSLMWGDFRVSQVLSLLLIVLSIGIIIYRRMKMNPPYYMEDKFGKVVKKK.

4 consecutive transmembrane segments (helical) span residues isoleucine 18–alanine 38, isoleucine 51–tyrosine 71, isoleucine 89–isoleucine 109, and isoleucine 116–glycine 136. Arginine 137 is a binding site for a 1,2-diacyl-sn-glycero-3-phospho-(1'-sn-glycerol). A run of 3 helical transmembrane segments spans residues glutamine 177–isoleucine 197, glycine 205–methionine 225, and phenylalanine 235–tyrosine 255.

This sequence belongs to the Lgt family.

It localises to the cell membrane. The catalysed reaction is L-cysteinyl-[prolipoprotein] + a 1,2-diacyl-sn-glycero-3-phospho-(1'-sn-glycerol) = an S-1,2-diacyl-sn-glyceryl-L-cysteinyl-[prolipoprotein] + sn-glycerol 1-phosphate + H(+). It participates in protein modification; lipoprotein biosynthesis (diacylglyceryl transfer). Catalyzes the transfer of the diacylglyceryl group from phosphatidylglycerol to the sulfhydryl group of the N-terminal cysteine of a prolipoprotein, the first step in the formation of mature lipoproteins. This chain is Phosphatidylglycerol--prolipoprotein diacylglyceryl transferase, found in Listeria monocytogenes serotype 4b (strain CLIP80459).